Here is a 1019-residue protein sequence, read N- to C-terminus: Katanin p80 WD40 repeat-containing subunit B1 homolog KTN80.1 (1019 aa).

WD repeat units lie at residues 13-53 (AHSG…SPMS), 56-95 (GHTS…MVRA), 98-137 (GHRS…CIQT), 140-181 (GHTR…HEFK), 183-221 (HEGP…LIGT), 224-264 (PEAT…DGVD), and 266-303 (GWST…LEPY). The DWD box motif lies at 114 to 130 (FLASGSSDTNLRVWDTR). Disordered regions lie at residues 388-424 (FGPA…TKSG), 455-474 (KSGL…LSEQ), 517-581 (IHRS…GSRE), and 607-652 (RGEK…RARS). A compositionally biased stretch (polar residues) spans 465-474 (QTQNAFLSEQ). A compositionally biased stretch (basic and acidic residues) spans 553 to 572 (IPSKTERVLSREKPGDEQKN). The segment covering 614-628 (TEGASTTIEQNNNAV) has biased composition (polar residues).

This sequence belongs to the WD repeat KATNB1 family. Component of KTN80-KTN1 complexes composed of a hexamer of KTN1-KTN80 heterodimers that sense microtubule (MT) geometry to confer precise MT severing. Interacts directly with AAA1/KTN1 and KTN80.3, and weakly with KTN80.4. As to expression, expressed at low levels in siliques, flowers, leaves, stems and roots.

The protein resides in the cytoplasm. It localises to the cytoskeleton. May participate in a complex which severs microtubules in an ATP-dependent manner. Microtubule severing may promote rapid reorganization of cellular microtubule arrays. Confers precision to microtubule (MT) severing by specific targeting of KTN1 to MT cleavage sites such as crossover or branching nucleation sites. Together with other KTN80s, regulates cell elongation by modulating MT organization. This is Katanin p80 WD40 repeat-containing subunit B1 homolog KTN80.1 from Arabidopsis thaliana (Mouse-ear cress).